Consider the following 505-residue polypeptide: Lysine--tRNA ligase (505 aa).

The Mg(2+) site is built by Glu415 and Glu422.

This sequence belongs to the class-II aminoacyl-tRNA synthetase family. Homodimer. It depends on Mg(2+) as a cofactor.

It is found in the cytoplasm. The enzyme catalyses tRNA(Lys) + L-lysine + ATP = L-lysyl-tRNA(Lys) + AMP + diphosphate. The polypeptide is Lysine--tRNA ligase (Shigella flexneri).